A 60-amino-acid polypeptide reads, in one-letter code: Conotoxin Cl1.1 (60 aa).

Residues 1-19 (MRCLPVIVILLLLISSAAA) form the signal peptide. Positions 20–48 (VVEGPLRVNRRLRPRKAPVDMQARDWNWG) are excised as a propeptide.

This sequence belongs to the conotoxin T superfamily. Post-translationally, contains 2 disulfide bonds. As to expression, expressed by the venom duct.

Its subcellular location is the secreted. This chain is Conotoxin Cl1.1, found in Californiconus californicus (California cone).